Reading from the N-terminus, the 588-residue chain is Polyphenol oxidase II, chloroplastic (588 aa).

Positions 1–10 (MASFTTSPCT) are enriched in polar residues. Residues 1–32 (MASFTTSPCTSAAPKTPKSLSSSATISSPLPK) form a disordered region. Residues 1–50 (MASFTTSPCTSAAPKTPKSLSSSATISSPLPKPSQIHIATAKRTHHFKVS) constitute a chloroplast transit peptide. Residues 16–29 (TPKSLSSSATISSP) show a composition bias toward low complexity. The transit peptide at 51 to 88 (CNAPNGDSQPKLDRRDVLLGLGGLAGAASLINNPLAFA) directs the protein to the thylakoid. Intrachain disulfides connect cysteine 99–cysteine 116 and cysteine 115–cysteine 179. Cu cation-binding residues include histidine 178, histidine 199, histidine 208, histidine 330, histidine 334, and histidine 366. Positions 182-199 (CNGGYVQTDYPDKEIQVH) form a cross-link, 2'-(S-cysteinyl)-histidine (Cys-His).

Belongs to the tyrosinase family. Monomer. Cu(2+) is required as a cofactor.

Its subcellular location is the plastid. It is found in the chloroplast thylakoid lumen. It carries out the reaction 2 catechol + O2 = 2 1,2-benzoquinone + 2 H2O. In terms of biological role, catalyzes the oxidation of mono- and o-diphenols to o-diquinones. The protein is Polyphenol oxidase II, chloroplastic (co-2) of Ipomoea batatas (Sweet potato).